A 239-amino-acid polypeptide reads, in one-letter code: LRRN4 C-terminal-like protein (239 aa).

The N-terminal stretch at 1–19 (MLGSLSLLWLAAMTTSLVS) is a signal peptide. The Extracellular segment spans residues 20–194 (QPQILTLEDY…KFIMPPKPVT (175 aa)). In terms of domain architecture, Fibronectin type-III spans 82–179 (QPEPPRLGEV…EGPENWTGPS (98 aa)). Asn132 and Asn174 each carry an N-linked (GlcNAc...) asparagine glycan. The chain crosses the membrane as a helical span at residues 195–215 (LVYAAVGVGTALALLSCAALV). The Cytoplasmic portion of the chain corresponds to 216–239 (WHFCLRERWGCPRRQGMAQASEAL).

The protein localises to the membrane. The sequence is that of LRRN4 C-terminal-like protein (Lrrn4cl) from Mus musculus (Mouse).